The primary structure comprises 325 residues: Dehydrogenase/reductase SDR family member 7B (325 aa).

The Cytoplasmic segment spans residues 1-17 (MISPSSRKGMLKERAMD). The chain crosses the membrane as a helical; Signal-anchor for type II membrane protein span at residues 18–38 (LVTQTTILPLLFGCLGIFSLF). Residues 39 to 325 (RLLQRTRSKA…ARKERKSKNS (287 aa)) lie on the Lumenal side of the membrane. The NAD(+) site is built by Ser-62 and Leu-64. Ser-194 contributes to the substrate binding site. NAD(+) is bound by residues Tyr-207, Lys-211, and Thr-242. Tyr-207 serves as the catalytic Proton acceptor.

It belongs to the short-chain dehydrogenases/reductases (SDR) family.

It localises to the endoplasmic reticulum membrane. Functionally, putative oxidoreductase. The protein is Dehydrogenase/reductase SDR family member 7B (Dhrs7b) of Rattus norvegicus (Rat).